A 463-amino-acid polypeptide reads, in one-letter code: MATSLMKSSLALHAAPRPRSVRLSATSSRVDSPQVSVVLGTQWGDEGKGKLVDNLAQQFDIVARAQGGANAGHTIYDETGRKFALHLVPSGILNPKATCVIGNGVVLHLPGLFEEIRRLKEKGVQVDGRLLVSDRAHLLFDLHKEIDGLREAELAGDGKQIGTTKRGIGPAYSSKATRNGLRVCDLFDRATFKTKLTNLAADGAKRFGEKFAYDVEGDIAAYEKLAEEIRPFVVDTVEYLHEALQSGKRILIEGANATMLDLDFGTYPYVTSSNPSIGGIATGLGLPPSSYDDIVGVAKAYTTRVGAGPYPTEIHGKLAEDLRAVGHEYGTTTGRPRRIGWMDIVALRYACKINGVTHINLTKLDVLDNLEEIQVGVGYKTKEGKMLKSVPADLHTLENVEVVYETLPGWQADISAARQWAQLPAAAQAYVQRIEDLIGIPVKWIGVGPGRDALVVKPEAPKK.

GTP-binding positions include 44–50 (GDEGKGK) and 72–74 (GHT). Catalysis depends on aspartate 45, which acts as the Proton acceptor. 2 residues coordinate Mg(2+): aspartate 45 and glycine 72. IMP-binding positions include 45 to 48 (DEGK), 70 to 73 (NAGH), threonine 164, arginine 178, asparagine 256, threonine 271, and arginine 335. Catalysis depends on histidine 73, which acts as the Proton donor. 331 to 337 (TTTGRPR) provides a ligand contact to substrate. GTP contacts are provided by residues arginine 337, 363–365 (KLD), and 446–448 (GVG).

Belongs to the adenylosuccinate synthetase family. As to quaternary structure, homodimer. The cofactor is Mg(2+).

It is found in the plastid. It localises to the chloroplast. The catalysed reaction is IMP + L-aspartate + GTP = N(6)-(1,2-dicarboxyethyl)-AMP + GDP + phosphate + 2 H(+). The protein operates within purine metabolism; AMP biosynthesis via de novo pathway; AMP from IMP: step 1/2. Its function is as follows. Plays an important role in the de novo pathway and in the salvage pathway of purine nucleotide biosynthesis. Catalyzes the first committed step in the biosynthesis of AMP from IMP. The sequence is that of Adenylosuccinate synthetase, chloroplastic from Chlamydomonas reinhardtii (Chlamydomonas smithii).